The primary structure comprises 137 residues: Nucleoside diphosphate kinase (137 aa).

Residues Lys9, Phe57, Arg85, Thr91, Arg102, and Asn112 each contribute to the ATP site. The Pros-phosphohistidine intermediate role is filled by His115.

This sequence belongs to the NDK family. In terms of assembly, homotetramer. Mg(2+) is required as a cofactor.

It is found in the cytoplasm. The enzyme catalyses a 2'-deoxyribonucleoside 5'-diphosphate + ATP = a 2'-deoxyribonucleoside 5'-triphosphate + ADP. It carries out the reaction a ribonucleoside 5'-diphosphate + ATP = a ribonucleoside 5'-triphosphate + ADP. In terms of biological role, major role in the synthesis of nucleoside triphosphates other than ATP. The ATP gamma phosphate is transferred to the NDP beta phosphate via a ping-pong mechanism, using a phosphorylated active-site intermediate. The polypeptide is Nucleoside diphosphate kinase (Thermus thermophilus (strain ATCC BAA-163 / DSM 7039 / HB27)).